Consider the following 173-residue polypeptide: NADH-ubiquinone oxidoreductase chain 6 (173 aa).

Helical transmembrane passes span 1 to 21 (MTYV…AVAS), 25 to 45 (PYFG…VLIW), 53 to 73 (LVLF…SAAL), 82 to 102 (LGSW…FGIL), and 142 to 162 (GVLL…LELV).

Belongs to the complex I subunit 6 family.

It is found in the mitochondrion membrane. The catalysed reaction is a ubiquinone + NADH + 5 H(+)(in) = a ubiquinol + NAD(+) + 4 H(+)(out). Its function is as follows. Core subunit of the mitochondrial membrane respiratory chain NADH dehydrogenase (Complex I) that is believed to belong to the minimal assembly required for catalysis. Complex I functions in the transfer of electrons from NADH to the respiratory chain. The immediate electron acceptor for the enzyme is believed to be ubiquinone. The sequence is that of NADH-ubiquinone oxidoreductase chain 6 (MT-ND6) from Tetraodon nigroviridis (Spotted green pufferfish).